Reading from the N-terminus, the 213-residue chain is Large ribosomal subunit protein uL4 (213 aa).

Residues 51–90 (TASTLTKAEVRGGGRKPYKQKHTGRARQGSIRNPHYVGGG) are disordered. The segment covering 63-75 (GGRKPYKQKHTGR) has biased composition (basic residues).

The protein belongs to the universal ribosomal protein uL4 family. In terms of assembly, part of the 50S ribosomal subunit.

One of the primary rRNA binding proteins, this protein initially binds near the 5'-end of the 23S rRNA. It is important during the early stages of 50S assembly. It makes multiple contacts with different domains of the 23S rRNA in the assembled 50S subunit and ribosome. In terms of biological role, forms part of the polypeptide exit tunnel. The polypeptide is Large ribosomal subunit protein uL4 (Malacoplasma penetrans (strain HF-2) (Mycoplasma penetrans)).